Consider the following 93-residue polypeptide: Co-chaperonin GroES (93 aa).

Belongs to the GroES chaperonin family. In terms of assembly, heptamer of 7 subunits arranged in a ring. Interacts with the chaperonin GroEL.

It localises to the cytoplasm. Together with the chaperonin GroEL, plays an essential role in assisting protein folding. The GroEL-GroES system forms a nano-cage that allows encapsulation of the non-native substrate proteins and provides a physical environment optimized to promote and accelerate protein folding. GroES binds to the apical surface of the GroEL ring, thereby capping the opening of the GroEL channel. The sequence is that of Co-chaperonin GroES from Streptococcus intermedius.